The chain runs to 160 residues: Major pollen allergen Bet v 1-M/N (160 aa).

Positions 55, 82, 84, and 101 each coordinate brassinolide.

It belongs to the BetVI family.

It is found in the cytoplasm. Functionally, may be a general steroid carrier protein. This chain is Major pollen allergen Bet v 1-M/N (BETV1M), found in Betula pendula (European white birch).